The chain runs to 192 residues: Adenylate kinase (192 aa).

Residue 10–18 coordinates ATP; it reads GVPGVGSTT.

It belongs to the archaeal adenylate kinase family. As to quaternary structure, monomer.

It is found in the cytoplasm. It catalyses the reaction AMP + ATP = 2 ADP. The sequence is that of Adenylate kinase (adkA) from Methanococcus voltae.